The chain runs to 197 residues: FMN-dependent NADH:quinone oxidoreductase 1 (197 aa).

Residues S10, 16 to 18 (SQS), 93 to 96 (MYNF), and 137 to 140 (TRGG) each bind FMN.

The protein belongs to the azoreductase type 1 family. As to quaternary structure, homodimer. Requires FMN as cofactor.

It carries out the reaction 2 a quinone + NADH + H(+) = 2 a 1,4-benzosemiquinone + NAD(+). It catalyses the reaction N,N-dimethyl-1,4-phenylenediamine + anthranilate + 2 NAD(+) = 2-(4-dimethylaminophenyl)diazenylbenzoate + 2 NADH + 2 H(+). In terms of biological role, quinone reductase that provides resistance to thiol-specific stress caused by electrophilic quinones. Also exhibits azoreductase activity. Catalyzes the reductive cleavage of the azo bond in aromatic azo compounds to the corresponding amines. This chain is FMN-dependent NADH:quinone oxidoreductase 1, found in Photobacterium profundum (strain SS9).